Reading from the N-terminus, the 685-residue chain is Methionine--tRNA ligase (685 aa).

Zn(2+)-binding residues include Cys-142, Cys-145, Cys-155, and Cys-158. A 'KMSKS' region motif is present at residues 330–334; sequence KMSKS. An ATP-binding site is contributed by Lys-333. Residues 584–685 enclose the tRNA-binding domain; the sequence is DFIKVDLRVA…SGAKPGDKVS (102 aa).

This sequence belongs to the class-I aminoacyl-tRNA synthetase family. MetG type 1 subfamily. Homodimer. Zn(2+) is required as a cofactor.

The protein localises to the cytoplasm. The catalysed reaction is tRNA(Met) + L-methionine + ATP = L-methionyl-tRNA(Met) + AMP + diphosphate. Functionally, is required not only for elongation of protein synthesis but also for the initiation of all mRNA translation through initiator tRNA(fMet) aminoacylation. This Acinetobacter baylyi (strain ATCC 33305 / BD413 / ADP1) protein is Methionine--tRNA ligase.